The following is a 271-amino-acid chain: ATP synthase subunit a (271 aa).

A run of 5 helical transmembrane segments spans residues 40–60 (TINI…LVLF), 100–120 (LIAP…LMDL), 146–166 (DVNV…FYNI), 220–240 (LIFI…LNVP), and 242–262 (AIFH…LTIV).

This sequence belongs to the ATPase A chain family. As to quaternary structure, F-type ATPases have 2 components, CF(1) - the catalytic core - and CF(0) - the membrane proton channel. CF(1) has five subunits: alpha(3), beta(3), gamma(1), delta(1), epsilon(1). CF(0) has three main subunits: a(1), b(2) and c(9-12). The alpha and beta chains form an alternating ring which encloses part of the gamma chain. CF(1) is attached to CF(0) by a central stalk formed by the gamma and epsilon chains, while a peripheral stalk is formed by the delta and b chains.

Its subcellular location is the cell inner membrane. Functionally, key component of the proton channel; it plays a direct role in the translocation of protons across the membrane. This Shigella flexneri protein is ATP synthase subunit a.